A 423-amino-acid polypeptide reads, in one-letter code: Deoxyguanosinetriphosphate triphosphohydrolase-like protein (423 aa).

The 151-residue stretch at 66–216 (RLTHSLEVAQ…MDFSDDIAYS (151 aa)) folds into the HD domain.

It belongs to the dGTPase family. Type 2 subfamily.

The chain is Deoxyguanosinetriphosphate triphosphohydrolase-like protein from Corynebacterium diphtheriae (strain ATCC 700971 / NCTC 13129 / Biotype gravis).